We begin with the raw amino-acid sequence, 292 residues long: Protoheme IX farnesyltransferase (292 aa).

Helical transmembrane passes span 13–33 (ILFG…QGSI), 35–55 (ILLL…GCVV), 84–104 (VALV…WFGV), 106–126 (GYAF…YSLW), 135–155 (TVIG…AVTH), 161–181 (ALLL…AIAI), 206–226 (IECV…YCFG), 231–251 (FFLI…IIGF), and 263–283 (FFLY…FTYQ).

This sequence belongs to the UbiA prenyltransferase family. Protoheme IX farnesyltransferase subfamily.

It is found in the cell inner membrane. The catalysed reaction is heme b + (2E,6E)-farnesyl diphosphate + H2O = Fe(II)-heme o + diphosphate. The protein operates within porphyrin-containing compound metabolism; heme O biosynthesis; heme O from protoheme: step 1/1. Converts heme B (protoheme IX) to heme O by substitution of the vinyl group on carbon 2 of heme B porphyrin ring with a hydroxyethyl farnesyl side group. In Acinetobacter baumannii (strain AB307-0294), this protein is Protoheme IX farnesyltransferase.